We begin with the raw amino-acid sequence, 405 residues long: Cytochrome P450 107B1 (405 aa).

A heme-binding site is contributed by Cys352.

This sequence belongs to the cytochrome P450 family. Requires heme as cofactor.

Its subcellular location is the cytoplasm. Functionally, not known, probably involved in the catabolism of octane and guaiacol. It displays a weak activity in the O-dealkylation of 7-ethoxycoumarin. In Saccharopolyspora erythraea (strain ATCC 11635 / DSM 40517 / JCM 4748 / NBRC 13426 / NCIMB 8594 / NRRL 2338), this protein is Cytochrome P450 107B1 (cyp107B1).